Consider the following 420-residue polypeptide: Gamma-glutamyl phosphate reductase (420 aa).

This sequence belongs to the gamma-glutamyl phosphate reductase family.

The protein resides in the cytoplasm. It carries out the reaction L-glutamate 5-semialdehyde + phosphate + NADP(+) = L-glutamyl 5-phosphate + NADPH + H(+). It functions in the pathway amino-acid biosynthesis; L-proline biosynthesis; L-glutamate 5-semialdehyde from L-glutamate: step 2/2. Its function is as follows. Catalyzes the NADPH-dependent reduction of L-glutamate 5-phosphate into L-glutamate 5-semialdehyde and phosphate. The product spontaneously undergoes cyclization to form 1-pyrroline-5-carboxylate. This is Gamma-glutamyl phosphate reductase from Neisseria meningitidis serogroup C (strain 053442).